The chain runs to 1072 residues: DNA-directed RNA polymerase subunit beta (1072 aa).

This sequence belongs to the RNA polymerase beta chain family. In plastids the minimal PEP RNA polymerase catalytic core is composed of four subunits: alpha, beta, beta', and beta''. When a (nuclear-encoded) sigma factor is associated with the core the holoenzyme is formed, which can initiate transcription.

The protein localises to the plastid. It is found in the chloroplast. The enzyme catalyses RNA(n) + a ribonucleoside 5'-triphosphate = RNA(n+1) + diphosphate. Its function is as follows. DNA-dependent RNA polymerase catalyzes the transcription of DNA into RNA using the four ribonucleoside triphosphates as substrates. The protein is DNA-directed RNA polymerase subunit beta of Amborella trichopoda.